The primary structure comprises 406 residues: E3 ubiquitin-protein ligase RING1 (406 aa).

Thr-24 carries the phosphothreonine modification. The necessary for transcriptional repression stretch occupies residues 30–234; sequence MDGTEIAVSP…GGAGSEDSGD (205 aa). Residue Ser-38 is modified to Phosphoserine. Residues 48–88 form an RING-type zinc finger; sequence CPICLDMLKNTMTTKECLHRFCSDCIVTALRSGNKECPTCR. Ser-140, Ser-187, and Ser-190 each carry phosphoserine. Disordered regions lie at residues 151–263 and 309–354; these read HRAQ…GEIE and QQQE…PSLE. Positions 175-187 are enriched in acidic residues; the sequence is EPGEGEGDGEDVS. The Nuclear localization signal motif lies at 201 to 204; sequence KRPR. The segment covering 214 to 228 has biased composition (gly residues); that stretch reads GTGGGAAGGACGGAG. Thr-215 bears the Phosphothreonine mark. Phosphoserine is present on residues Ser-229 and Ser-232. The interval 230 to 406 is necessary for interaction with CBX2; that stretch reads EDSGDRGGTL…LCYAPTKDPK (177 aa). Positions 235 to 244 are enriched in gly residues; sequence RGGTLGGGTL. Residues 246–258 are compositionally biased toward pro residues; sequence PPSPPGAPSPPEP. A phosphoserine mark is found at Ser-248 and Ser-254. Residues 317–343 are compositionally biased toward gly residues; it reads GGPGGGASDTGGPDGGGGERGVAGGGE.

As to quaternary structure, component of chromatin-associated Polycomb (PcG) complexes. Part of the E2F6.com-1 complex in G0 phase composed of E2F6, MGA, MAX, TFDP1, CBX3, BAT8, EUHMTASE1, RING1, RNF2/RING2 MBLR, L3MBTL2 and YAF2. Interacts with CBX2 and PCGF6. Component of a PRC1-like complex. Component of repressive BCOR complex containing Polycomb group subcomplex at least composed of RYBP, PCGF1, BCOR and RNF2/RING2. Interacts with PHC2, PCGF2, RNF2; CBX6, CBX7 and CBX8. Interacts with BMI1. Interacts with MN1. Interacts with USP26.

The protein localises to the nucleus speckle. The enzyme catalyses S-ubiquitinyl-[E2 ubiquitin-conjugating enzyme]-L-cysteine + [acceptor protein]-L-lysine = [E2 ubiquitin-conjugating enzyme]-L-cysteine + N(6)-ubiquitinyl-[acceptor protein]-L-lysine.. Its pathway is protein modification; protein ubiquitination. Its function is as follows. Constitutes one of the E3 ubiquitin-protein ligases that mediate monoubiquitination of 'Lys-119' of histone H2A, thereby playing a central role in histone code and gene regulation. H2A 'Lys-119' ubiquitination gives a specific tag for epigenetic transcriptional repression and participates in X chromosome inactivation of female mammals. Essential component of a Polycomb group (PcG) multiprotein PRC1-like complex, a complex class required to maintain the transcriptionally repressive state of many genes, including Hox genes, throughout development. PcG PRC1 complex acts via chromatin remodeling and modification of histones, rendering chromatin heritably changed in its expressibility. Compared to RNF2/RING2, it does not have the main E3 ubiquitin ligase activity on histone H2A, and it may rather act as a modulator of RNF2/RING2 activity. The chain is E3 ubiquitin-protein ligase RING1 from Mus musculus (Mouse).